Reading from the N-terminus, the 333-residue chain is Lipoyl synthase (333 aa).

The tract at residues 1–29 (MTDSAAGATEVATPATPSNKPYDATAKQK) is disordered. Cysteine 80, cysteine 85, cysteine 91, cysteine 106, cysteine 110, cysteine 113, and serine 320 together coordinate [4Fe-4S] cluster. In terms of domain architecture, Radical SAM core spans 91-309 (CFGKGTATFM…EEKAYEMGFT (219 aa)).

The protein belongs to the radical SAM superfamily. Lipoyl synthase family. Requires [4Fe-4S] cluster as cofactor.

The protein localises to the cytoplasm. It carries out the reaction [[Fe-S] cluster scaffold protein carrying a second [4Fe-4S](2+) cluster] + N(6)-octanoyl-L-lysyl-[protein] + 2 oxidized [2Fe-2S]-[ferredoxin] + 2 S-adenosyl-L-methionine + 4 H(+) = [[Fe-S] cluster scaffold protein] + N(6)-[(R)-dihydrolipoyl]-L-lysyl-[protein] + 4 Fe(3+) + 2 hydrogen sulfide + 2 5'-deoxyadenosine + 2 L-methionine + 2 reduced [2Fe-2S]-[ferredoxin]. Its pathway is protein modification; protein lipoylation via endogenous pathway; protein N(6)-(lipoyl)lysine from octanoyl-[acyl-carrier-protein]: step 2/2. Its function is as follows. Catalyzes the radical-mediated insertion of two sulfur atoms into the C-6 and C-8 positions of the octanoyl moiety bound to the lipoyl domains of lipoate-dependent enzymes, thereby converting the octanoylated domains into lipoylated derivatives. In Ralstonia pickettii (strain 12J), this protein is Lipoyl synthase.